The sequence spans 1207 residues: MVDVNRFKSMQITLASPSKVRSWSYGEVKKPETINYRTLKPEREGLFDEVIFGPTKDWECACGKYKRIRYKGIVCDRCGVEVTRAKVRRERMGHIELKAPVSHIWYFKGIPSRMGLTLDMSPRALEEVIYFAAYVVIDPKDTPLEPKSLLTEREYREKLQEYGHGSFVAKMGAEAIQDLLKRVDLAAEIAELKEELKSASGQKRIKAVRRLDVLDAFNKSGNKPEWMVLNILPVIPPDLRPMVQLDGGRFAASDLNDLYRRVINRNNRLARLLELNAPGIIVQNEKRMLQEAVDALIDNGRRGRPITGPGSRPLKSLSHMLKGKQGRFRQNLLGKRVDFSGRSVIAVGPTLKMYQCGVPREMAIELFKPFVMREIVAKEYAGNVKAAKRMVERGDERIWDILEEVIKEHPVLLNRAPTLHRLGIQAFEPVLIDGKALRLHPLVCEAYNADFDGDQMAIHVPLSEEAQAEARLLMLAAEHILNPKDGKPVVTPSQDMVLGNYYLTMEDAGREGEGMIFKDKDEAVMAYRNGYAHLHSRVGIAVDSMPNKPWKDSQRHKIMVTTVGKILFNDIMPEDLPYLQEPNNANLTEGTPDKYFLEPGQDIQEVIDGLDINVPFKKKNLGNIIAETFKRFRTTETSAFLDRLKDLGYYHSTLAGLTVGIADIPVIDNKAEIIDAAHHRVEEINKAFRRGLMTDDDRYVAVTTTWREAKEALEKRLIETQDPKNPIVMMMDSGARGNISNFSQLAGMRGLMAAPNGRIMELPILSNFREGLSVLEMFFSTHGARKGMTDTALKTADSGYLTRRLVDVAQDVIIREDDCGTDRGLLIRAITDGKEVTETLEVRLQGRYTRKSVKHPETGEVLIGADQLITEDMARKIVDAGVEEVTIRSVFTCATRHGVCRHCYGINLATGDAVEVGEAVGTIAAQSIGEPGTQLTMRTFHTGGVASNTDITQGLPRIQEIFEARNPKGEAVITEVKGNVVEIEEDASTRTKKVYVQGKTGMGEYVVPFTARMKVEVGDEVNRGAALTEGSIQPKRLLEVRDTLSVETYLLAEVQKVYRSQGVEIGDKHVEVMVRQMLRKVRVMDPGDTDLLPGTLMDISDFTDANKDIVISGGIPATSRPVLMGITKASLETNSFLSAASFQETTRVLTDAAIRGKKDHLLGLKENVIIGKIIPAGTGMARYRNIEPQAMNEIEVIDHTEVSAEAE.

Residues Cys-60, Cys-62, Cys-75, and Cys-78 each contribute to the Zn(2+) site. Positions 450, 452, and 454 each coordinate Mg(2+). 4 residues coordinate Zn(2+): Cys-819, Cys-893, Cys-900, and Cys-903.

Belongs to the RNA polymerase beta' chain family. As to quaternary structure, the RNAP catalytic core consists of 2 alpha, 1 beta, 1 beta' and 1 omega subunit. When a sigma factor is associated with the core the holoenzyme is formed, which can initiate transcription. Mg(2+) serves as cofactor. The cofactor is Zn(2+).

It carries out the reaction RNA(n) + a ribonucleoside 5'-triphosphate = RNA(n+1) + diphosphate. DNA-dependent RNA polymerase catalyzes the transcription of DNA into RNA using the four ribonucleoside triphosphates as substrates. The protein is DNA-directed RNA polymerase subunit beta' of Streptococcus pyogenes serotype M3 (strain ATCC BAA-595 / MGAS315).